We begin with the raw amino-acid sequence, 342 residues long: Succinylglutamate desuccinylase (342 aa).

Zn(2+)-binding residues include His63, Glu66, and His155. The active site involves Glu219.

This sequence belongs to the AspA/AstE family. Succinylglutamate desuccinylase subfamily. It depends on Zn(2+) as a cofactor.

It catalyses the reaction N-succinyl-L-glutamate + H2O = L-glutamate + succinate. Its pathway is amino-acid degradation; L-arginine degradation via AST pathway; L-glutamate and succinate from L-arginine: step 5/5. Its function is as follows. Transforms N(2)-succinylglutamate into succinate and glutamate. The chain is Succinylglutamate desuccinylase from Vibrio parahaemolyticus serotype O3:K6 (strain RIMD 2210633).